The following is a 556-amino-acid chain: Oxygen-dependent choline dehydrogenase (556 aa).

Residue 4–33 (DYIIIGAGSAGNVLATRLTEDPNTTVLLLE) participates in FAD binding. His473 acts as the Proton acceptor in catalysis.

It belongs to the GMC oxidoreductase family. FAD is required as a cofactor.

It is found in the cell membrane. It carries out the reaction choline + A = betaine aldehyde + AH2. It catalyses the reaction betaine aldehyde + NAD(+) + H2O = glycine betaine + NADH + 2 H(+). It participates in amine and polyamine biosynthesis; betaine biosynthesis via choline pathway; betaine aldehyde from choline (cytochrome c reductase route): step 1/1. Its function is as follows. Involved in the biosynthesis of the osmoprotectant glycine betaine. Catalyzes the oxidation of choline to betaine aldehyde and betaine aldehyde to glycine betaine at the same rate. This is Oxygen-dependent choline dehydrogenase from Escherichia coli O6:H1 (strain CFT073 / ATCC 700928 / UPEC).